The following is a 328-amino-acid chain: Protein chibby homolog 2 (328 aa).

Positions 180–231 are disordered; that stretch reads NKGASSVQKDTENTTAAGEGSLGPTCQEEHDAKEESTTPTQNDTKIAPSTED. Positions 182–195 are enriched in polar residues; the sequence is GASSVQKDTENTTA. The segment covering 206 to 215 has biased composition (basic and acidic residues); the sequence is QEEHDAKEES. Residues 259–307 adopt a coiled-coil conformation; that stretch reads RESLHALQDESKFFQEEYKKLKLQLNNVKNTVSDITTQMEMLEKELIAI.

It belongs to the chibby family. SPERT subfamily.

This is Protein chibby homolog 2 (CBY2) from Gallus gallus (Chicken).